We begin with the raw amino-acid sequence, 212 residues long: NADH dehydrogenase [ubiquinone] iron-sulfur protein 8, mitochondrial (212 aa).

The N-terminal 36 residues, 1–36, are a transit peptide targeting the mitochondrion; the sequence is MRCLTMPMLLRALAQAQAARAGHASVRGLHSSAVAA. 4Fe-4S ferredoxin-type domains are found at residues 104-133 and 143-172; these read RRYP…IEAE and TRYD…EGPN. [4Fe-4S] cluster contacts are provided by Cys113, Cys116, Cys119, Cys123, Cys152, Cys155, Cys158, and Cys162.

It belongs to the complex I 23 kDa subunit family. In terms of assembly, core subunit of respiratory chain NADH dehydrogenase (Complex I) which is composed of 45 different subunits. This is a component of the iron-sulfur (IP) fragment of the enzyme. Interacts with RAB5IF. Requires [4Fe-4S] cluster as cofactor.

It is found in the mitochondrion inner membrane. The enzyme catalyses a ubiquinone + NADH + 5 H(+)(in) = a ubiquinol + NAD(+) + 4 H(+)(out). In terms of biological role, core subunit of the mitochondrial membrane respiratory chain NADH dehydrogenase (Complex I) which catalyzes electron transfer from NADH through the respiratory chain, using ubiquinone as an electron acceptor. Essential for the catalytic activity and assembly of complex I. The sequence is that of NADH dehydrogenase [ubiquinone] iron-sulfur protein 8, mitochondrial (NDUFS8) from Bos taurus (Bovine).